The chain runs to 144 residues: Large ribosomal subunit protein eL27 (144 aa).

It belongs to the eukaryotic ribosomal protein eL27 family.

It localises to the cytoplasm. The chain is Large ribosomal subunit protein eL27 (RPL27) from Tetrahymena thermophila.